The chain runs to 117 residues: Minor capsid protein p17 (117 aa).

N12 carries N-linked (GlcNAc...) asparagine; by host glycosylation. Residues 39-59 traverse the membrane as a helical segment; sequence AILLGILILLVIILIIVAIVY. The disordered stretch occupies residues 96-117; that stretch reads KNSTSQQSHIPSDEQLAELAHS. N97 carries N-linked (GlcNAc...) asparagine; by host glycosylation.

Belongs to the asfivirus minor capsid protein p17 family. As to quaternary structure, interacts with the minor capsid protein M1249L and with the hexon capsid protein p72 capsomers; these interactions form a rigid zipper structure that stabilizes the capsomers. Interacts with host STING1.

It localises to the virion membrane. The protein resides in the host endoplasmic reticulum membrane. In terms of biological role, together with the penton and the other minor capsid proteins (M1249L, p49), forms a complicated network immediately below the outer capsid shell, stabilizing the whole capsid. Three copies of p17 encircle each p72 capsomer in the inner capsid shell, anchoring p72 capsomers on the inner membrane. Required for the assembly of the capsid and icosahedral morphogenesis. Additionally, inhibits the host cGAS-STING pathway through its interaction with STING1 and subsequent interference of the recruitment of downstream components TBK1 and IKBKE. The sequence is that of Minor capsid protein p17 from African swine fever virus (isolate Warthog/Namibia/Wart80/1980) (ASFV).